A 416-amino-acid chain; its full sequence is Gamma-glutamyl phosphate reductase (416 aa).

It belongs to the gamma-glutamyl phosphate reductase family.

It localises to the cytoplasm. The enzyme catalyses L-glutamate 5-semialdehyde + phosphate + NADP(+) = L-glutamyl 5-phosphate + NADPH + H(+). The protein operates within amino-acid biosynthesis; L-proline biosynthesis; L-glutamate 5-semialdehyde from L-glutamate: step 2/2. Catalyzes the NADPH-dependent reduction of L-glutamate 5-phosphate into L-glutamate 5-semialdehyde and phosphate. The product spontaneously undergoes cyclization to form 1-pyrroline-5-carboxylate. In Leptospira borgpetersenii serovar Hardjo-bovis (strain JB197), this protein is Gamma-glutamyl phosphate reductase.